The following is an 807-amino-acid chain: Probable E3 ubiquitin-protein ligase mug30 (807 aa).

The 355-residue stretch at 453 to 807 folds into the HECT domain; it reads RNKDFRKALK…LLETNGFNIR (355 aa). Cysteine 775 serves as the catalytic Glycyl thioester intermediate.

The protein resides in the cytoplasm. Its subcellular location is the cytoskeleton. The protein localises to the microtubule organizing center. It is found in the spindle pole body. It carries out the reaction S-ubiquitinyl-[E2 ubiquitin-conjugating enzyme]-L-cysteine + [acceptor protein]-L-lysine = [E2 ubiquitin-conjugating enzyme]-L-cysteine + N(6)-ubiquitinyl-[acceptor protein]-L-lysine.. It functions in the pathway protein modification; protein ubiquitination. In terms of biological role, probable E3 ubiquitin-protein ligase. Has a role in meiosis. This Schizosaccharomyces pombe (strain 972 / ATCC 24843) (Fission yeast) protein is Probable E3 ubiquitin-protein ligase mug30 (mug30).